The primary structure comprises 159 residues: Small ribosomal subunit protein bS6 (159 aa).

Positions 93–151 are enriched in basic and acidic residues; that stretch reads VDEHEEGPSAMMRKADRDRERDDRGPREGGFRGDREGRGDREGGGFRGDRGPRRPREDA. Residues 93-159 form a disordered region; it reads VDEHEEGPSA…DADTAAASEE (67 aa).

This sequence belongs to the bacterial ribosomal protein bS6 family.

In terms of biological role, binds together with bS18 to 16S ribosomal RNA. This is Small ribosomal subunit protein bS6 from Rhodopseudomonas palustris (strain HaA2).